A 605-amino-acid chain; its full sequence is Protein kinase wis1 (605 aa).

Positions 1–20 (MSSPNNQPLSCSLRQLSISP) are enriched in polar residues. The interval 1-141 (MSSPNNQPLS…TPPGPFPGGL (141 aa)) is disordered. 2 stretches are compositionally biased toward low complexity: residues 31-73 (GSLL…SSPS) and 90-105 (RLGR…SLNL). Over residues 106 to 115 (DMKDPSEKPR) the composition is skewed to basic and acidic residues. Phosphoserine is present on Ser-168. Positions 188–200 (SQLAGRLSNSPVK) are enriched in polar residues. The interval 188–263 (SQLAGRLSNS…PSSMASRRGL (76 aa)) is disordered. Residues 244-256 (SNSNPTSPVSPSS) show a composition bias toward low complexity. At Ser-253 the chain carries Phosphoserine. One can recognise a Protein kinase domain in the interval 320 to 579 (IIKLEELGKG…YHELANHPWL (260 aa)). Residues 326–334 (LGKGNYGVV) and Lys-349 contribute to the ATP site. Asp-441 serves as the catalytic Proton acceptor. Ser-469 carries the post-translational modification Phosphoserine. Thr-473 is modified (phosphothreonine).

It belongs to the protein kinase superfamily. STE Ser/Thr protein kinase family. MAP kinase kinase subfamily. Dephosphorylated by pyp1 and pyp2.

It catalyses the reaction L-seryl-[protein] + ATP = O-phospho-L-seryl-[protein] + ADP + H(+). The enzyme catalyses L-threonyl-[protein] + ATP = O-phospho-L-threonyl-[protein] + ADP + H(+). It carries out the reaction L-tyrosyl-[protein] + ATP = O-phospho-L-tyrosyl-[protein] + ADP + H(+). Its function is as follows. Dosage-dependent regulator of mitosis with serine/ threonine protein kinase activity. May play a role in the integration of nutritional sensing with the control over entry into mitosis. It may interact with cdc25, wee1 and win1. May activate sty1. The sequence is that of Protein kinase wis1 (wis1) from Schizosaccharomyces pombe (strain 972 / ATCC 24843) (Fission yeast).